Reading from the N-terminus, the 126-residue chain is Large ribosomal subunit protein uL14m (126 aa).

Belongs to the universal ribosomal protein uL14 family. In terms of assembly, component of the mitochondrial large ribosomal subunit (mt-LSU). Mature yeast 74S mitochondrial ribosomes consist of a small (37S) and a large (54S) subunit. The 37S small subunit contains a 15S ribosomal RNA (15S mt-rRNA) and at least 32 different proteins. The 54S large subunit contains a 21S rRNA (21S mt-rRNA) and at least 45 different proteins.

The protein resides in the mitochondrion. In terms of biological role, component of the mitochondrial ribosome (mitoribosome), a dedicated translation machinery responsible for the synthesis of mitochondrial genome-encoded proteins, including at least some of the essential transmembrane subunits of the mitochondrial respiratory chain. The mitoribosomes are attached to the mitochondrial inner membrane and translation products are cotranslationally integrated into the membrane. The protein is Large ribosomal subunit protein uL14m (mrpl38) of Schizosaccharomyces pombe (strain 972 / ATCC 24843) (Fission yeast).